The following is a 786-amino-acid chain: Exo-beta-D-glucosaminidase (786 aa).

Residues Y53, 102–103 (GE), 178–179 (DE), E306, E347, and Y379 each bind substrate. The Proton donor role is filled by E179. E347 functions as the Nucleophile in the catalytic mechanism.

It belongs to the glycosyl hydrolase 35 family. Homodimer.

It localises to the cytoplasm. It carries out the reaction beta-D-glucosaminyl-(1-&gt;4)-N-acetyl-D-glucosamine + H2O = D-glucosamine + N-acetyl-D-glucosamine. The protein operates within glycan degradation; chitin degradation. Its function is as follows. Exo-type enzyme that specifically cleaves the non-reducing terminal glycosidic bond of chitooligosaccharides. Catalyzes the hydrolysis of GlcN-GlcNAc to glucosamine (GlcN) and N-acetylglucosamine (GlcNAc). Involved in chitin degradation. Can also hydrolyze reduced chitobiose (GlcN2OH) and chitooligosaccharides of various chain lengths. In Thermococcus kodakarensis (strain ATCC BAA-918 / JCM 12380 / KOD1) (Pyrococcus kodakaraensis (strain KOD1)), this protein is Exo-beta-D-glucosaminidase.